Consider the following 326-residue polypeptide: Small ribosomal subunit biogenesis GTPase RsgA (326 aa).

Residues 80–241 enclose the CP-type G domain; it reads LSHQMHIIAS…IIDTPGIKGF (162 aa). GTP-binding positions include 129–132 and 183–191; these read NKID and GHSGVGKST. 4 residues coordinate Zn(2+): Cys-265, Cys-270, His-272, and Cys-278.

This sequence belongs to the TRAFAC class YlqF/YawG GTPase family. RsgA subfamily. In terms of assembly, monomer. Associates with 30S ribosomal subunit, binds 16S rRNA. Zn(2+) is required as a cofactor.

The protein resides in the cytoplasm. Its function is as follows. One of several proteins that assist in the late maturation steps of the functional core of the 30S ribosomal subunit. Helps release RbfA from mature subunits. May play a role in the assembly of ribosomal proteins into the subunit. Circularly permuted GTPase that catalyzes slow GTP hydrolysis, GTPase activity is stimulated by the 30S ribosomal subunit. The polypeptide is Small ribosomal subunit biogenesis GTPase RsgA (Flavobacterium psychrophilum (strain ATCC 49511 / DSM 21280 / CIP 103535 / JIP02/86)).